The primary structure comprises 840 residues: E3 ubiquitin-protein ligase RNF19A (840 aa).

The tract at residues 40–61 (SDRDLQSSTSSVSLPSVKKAPK) is disordered. The span at 45–56 (QSSTSSVSLPSV) shows a compositional bias: low complexity. Positions 128-351 (DFIECPLCLL…LSPSGCTFWG (224 aa)) are TRIAD supradomain. Zn(2+)-binding residues include C132, C135, C150, H152, C155, C158, C176, C179, C219, C224, C241, C246, C251, C254, H259, C264, C301, and C304. The RING-type 1 zinc-finger motif lies at 132–179 (CPLCLLRHSKDRFPDIMTCHHRSCVDCLRQYLRIEISESRVNISCPEC). Residues 199 to 264 (EKYEEFMLRR…KQIWHPNQTC (66 aa)) form an IBR-type zinc finger. The RING-type 2; atypical zinc finger occupies 301 to 332 (CPRCAAYIIKMNDGSCNHMTCAVCGCEFCWLC). C316 is a catalytic residue. C321, C324, C329, C332, H340, and C347 together coordinate Zn(2+). 2 helical membrane-spanning segments follow: residues 368-388 (LVGA…AMII) and 424-444 (VIVS…IMLA). Disordered stretches follow at residues 625–685 (FKFR…GNMK), 700–721 (QQST…PSVA), and 786–808 (CSDV…GGKP). At S631 the chain carries Phosphoserine. Residues 660–840 (ATKWSKEATG…DLKVAVQTEI (181 aa)) form an interaction with CASR region. A compositionally biased stretch (basic residues) spans 671 to 683 (KKSKSGKLRKKGN). A compositionally biased stretch (polar residues) spans 700 to 717 (QQSTNSSEFEAPSLSDSM).

It belongs to the RBR family. RNF19 subfamily. Interacts with UBE2L3 and UBE2L6. Also interacts with transcription factor Sp1. Interacts with SNCAIP and CASR. Interacts with VCP.

The protein resides in the membrane. Its subcellular location is the cytoplasm. The protein localises to the cytoskeleton. It is found in the microtubule organizing center. It localises to the centrosome. The enzyme catalyses [E2 ubiquitin-conjugating enzyme]-S-ubiquitinyl-L-cysteine + [acceptor protein]-L-lysine = [E2 ubiquitin-conjugating enzyme]-L-cysteine + [acceptor protein]-N(6)-ubiquitinyl-L-lysine.. It participates in protein modification; protein ubiquitination. In terms of biological role, E3 ubiquitin-protein ligase which accepts ubiquitin from E2 ubiquitin-conjugating enzymes UBE2L3 and UBE2L6 in the form of a thioester and then directly transfers the ubiquitin to targeted substrates, such as SNCAIP or CASR. The protein is E3 ubiquitin-protein ligase RNF19A (Rnf19a) of Mus musculus (Mouse).